The following is a 401-amino-acid chain: MKEKIVLAYSGGLDTSVAVQWLIDKGYDVVACCLDVGEGKDLDIVYKKALDMGAVECHIIDATKEFSDEYVSYAIKGNLMYENAYPLVSALSRPLIAKKLVEIAEKTNSVGIAHGCTGKGNDQVRFEVAIKALNPSLKAFAPVREWAWSREEEIDYAIKHNIPVSINHDSPYSIDQNLWGRANECGILEDPYAAPPEDAFDLTNALEETPDTADEIILTFDKGIPVQIDGKTYELDDLILTLNALAGKHGIGRIDHVENRLVGIKSREIYEAPAAEVILKAHKALETITLTKDVAHFKPIIEKQFAEQLYNGLWFSPLTDSLKLFIDSTQQYVSGDVRIKLFKGNAIVNGRKSPYTLYDEKLATYTKEDAFNQDAAVGFIDIYGLPTQVNAMLHGGYSNEQ.

Ala8 to Ser16 contributes to the ATP binding site. Residue Tyr85 coordinates L-citrulline. Residue Gly115 participates in ATP binding. Positions 117, 121, and 122 each coordinate L-aspartate. L-citrulline is bound at residue Asn121. L-citrulline is bound by residues Arg125, Ser173, Glu258, and Tyr270.

This sequence belongs to the argininosuccinate synthase family. Type 1 subfamily. Homotetramer.

The protein localises to the cytoplasm. The enzyme catalyses L-citrulline + L-aspartate + ATP = 2-(N(omega)-L-arginino)succinate + AMP + diphosphate + H(+). The protein operates within amino-acid biosynthesis; L-arginine biosynthesis; L-arginine from L-ornithine and carbamoyl phosphate: step 2/3. This Staphylococcus aureus (strain Mu3 / ATCC 700698) protein is Argininosuccinate synthase.